The primary structure comprises 445 residues: StAR-related lipid transfer protein 3 (445 aa).

The Cytoplasmic portion of the chain corresponds to 1–51 (MSKLPGELARDLECSLPAVASLGSSLSHSQSLSSHLLPPPEKRRAISDVRR). Residues 46-217 (ISDVRRTFCL…YSPPESFAGS (172 aa)) form the MENTAL domain. The chain crosses the membrane as a helical span at residues 52–72 (TFCLFVTFDLLFISLLWIIEL). Residues 73–94 (NTNTGIRKNLEQEIIQYNFKTS) lie on the Extracellular side of the membrane. A helical transmembrane segment spans residues 95–115 (FFDIFVLAFFRFSGLLLGYAV). Over 116 to 120 (LRLQH) the chain is Cytoplasmic. Residues 121 to 141 (WWVIAVTTLVSSAFLIVKVIL) form a helical membrane-spanning segment. At 142-148 (SELLSKG) the chain is on the extracellular side. Residues 149 to 169 (AFGYLLPIVSFVLAWLETWFL) traverse the membrane as a helical segment. Residues 170 to 445 (DFKVLPQEAE…QRISELGARA (276 aa)) lie on the Cytoplasmic side of the membrane. 2 consecutive short sequence motifs (FFAT) follow at residues 206 to 212 (QFYSPPE) and 207 to 212 (FYSPPE). Phosphoserine occurs at positions 209, 217, and 221. One can recognise an START domain in the interval 248–443 (VVDQILAQEE…LRQRISELGA (196 aa)).

Belongs to the STARD3 family. In terms of assembly, homodimer. Interacts (via the MENTAL domain) with STARD3NL. Interacts (via phosphorylated FFAT motif) with VAPA (via MSP domain). Interacts (via phosphorylated FFAT motif) with VAPB (via MSP domain). Interacts (via phosphorylated FFAT motif) with MOSPD2 (via MSP domain); this interaction allows enrichment of MOSPD2 around endosomes. Post-translationally, phosphorylation at Ser-209 is necessary and sufficient for the direct interaction of the phosphorylated FFAT motif with the MSP domain of MOSPD2, VAPA and VAPB and allows the tethering of two membranes that participates in the formation of ER-endosome contacts. Phosphorylation of the FFAT motif leads to conformation changes. Additional phosphorylations around the core FFAT motif (QFYSPPE) are not essential but strengthen the interaction with MOSPD2, VAPA and VAPB. Phosphorylation at Ser-209 of FFAT motif drives membrane tethering between the endoplasmic reticulum and late endosomes via interaction with VAPA and VAPB that in turn allows the efficient transport of sterol mediated by the START domain. In terms of tissue distribution, present in retina. Localizes to all neurons of macular retina and especially cone inner segments and axons (at protein level).

Its subcellular location is the late endosome membrane. The catalysed reaction is cholesterol(in) = cholesterol(out). Sterol-binding protein that mediates cholesterol transport from the endoplasmic reticulum to endosomes. The sterol transport mechanism is triggered by phosphorylation of FFAT motif that leads to membrane tethering between the endoplasmic reticulum and late endosomes via interaction with VAPA and VAPB. Acts as a lipid transfer protein that redirects sterol to the endosome at the expense of the cell membrane and favors membrane formation inside endosomes. May also mediate cholesterol transport between other membranes, such as mitochondria membrane or cell membrane. However, such results need additional experimental evidences; probably mainly mediates cholesterol transport from the endoplasmic reticulum to endosomes. Does not activate transcriptional cholesterol sensing. Able to bind other lipids, such as lutein, a xanthophyll carotenoids that form the macular pigment of the retina. Able to bind other lipids, such as lutein, a xanthophyll carotenoids that form the macular pigment of the retina. The protein is StAR-related lipid transfer protein 3 of Macaca mulatta (Rhesus macaque).